Here is a 607-residue protein sequence, read N- to C-terminus: UvrABC system protein C (607 aa).

Positions 15 to 92 (SQPGSYQMKD…IKRYRPYFNI (78 aa)) constitute a GIY-YIG domain. The UVR domain occupies 197–232 (GKAISDIKKKMKRASDSTEYELAADFRDRLKFIDQT).

It belongs to the UvrC family. In terms of assembly, interacts with UvrB in an incision complex.

Its subcellular location is the cytoplasm. In terms of biological role, the UvrABC repair system catalyzes the recognition and processing of DNA lesions. UvrC both incises the 5' and 3' sides of the lesion. The N-terminal half is responsible for the 3' incision and the C-terminal half is responsible for the 5' incision. The protein is UvrABC system protein C of Oenococcus oeni (strain ATCC BAA-331 / PSU-1).